Here is a 288-residue protein sequence, read N- to C-terminus: Syntaxin-1B (288 aa).

Positions 1-13 (MKDRTQELRSAKD) are enriched in basic and acidic residues. The segment at 1–20 (MKDRTQELRSAKDSDDEEEV) is disordered. The Cytoplasmic segment spans residues 1–264 (MKDRTQELRS…KYQSKARRKK (264 aa)). Phosphoserine occurs at positions 10 and 14. Residues 29 to 104 (MDEFFEQVEE…IEQSIEQEEG (76 aa)) are a coiled coil. In terms of domain architecture, t-SNARE coiled-coil homology spans 191 to 253 (LNEIETRHNE…ERAVSDTKKA (63 aa)). Residues 265–288 (IMIIICCVVLGVVLASSIGGTLGL) traverse the membrane as a helical; Anchor for type IV membrane protein segment.

This sequence belongs to the syntaxin family. As to quaternary structure, interacts with OTOF. Interacts with SYT6 and SYT8; the interaction is Ca(2+)-dependent. Post-translationally, phosphorylated by CK2. In terms of processing, (Microbial infection) Targeted and hydrolyzed by C.botulinum neurotoxin type C (BoNT/C); cleavage by BoNT/C inhibits neurotransmitter release. Probably hydrolyzes the 252-Lys-|-Ala-253 bond.

Its subcellular location is the membrane. Its function is as follows. Potentially involved in docking of synaptic vesicles at presynaptic active zones. May mediate Ca(2+)-regulation of exocytosis acrosomal reaction in sperm. This chain is Syntaxin-1B (STX1B), found in Bos taurus (Bovine).